The following is a 157-amino-acid chain: Crossover junction endodeoxyribonuclease RuvC (157 aa).

Catalysis depends on residues Asp-7, Glu-70, and Asp-142. 3 residues coordinate Mg(2+): Asp-7, Glu-70, and Asp-142.

This sequence belongs to the RuvC family. Homodimer which binds Holliday junction (HJ) DNA. The HJ becomes 2-fold symmetrical on binding to RuvC with unstacked arms; it has a different conformation from HJ DNA in complex with RuvA. In the full resolvosome a probable DNA-RuvA(4)-RuvB(12)-RuvC(2) complex forms which resolves the HJ. Requires Mg(2+) as cofactor.

The protein resides in the cytoplasm. The catalysed reaction is Endonucleolytic cleavage at a junction such as a reciprocal single-stranded crossover between two homologous DNA duplexes (Holliday junction).. Its function is as follows. The RuvA-RuvB-RuvC complex processes Holliday junction (HJ) DNA during genetic recombination and DNA repair. Endonuclease that resolves HJ intermediates. Cleaves cruciform DNA by making single-stranded nicks across the HJ at symmetrical positions within the homologous arms, yielding a 5'-phosphate and a 3'-hydroxyl group; requires a central core of homology in the junction. The consensus cleavage sequence is 5'-(A/T)TT(C/G)-3'. Cleavage occurs on the 3'-side of the TT dinucleotide at the point of strand exchange. HJ branch migration catalyzed by RuvA-RuvB allows RuvC to scan DNA until it finds its consensus sequence, where it cleaves and resolves the cruciform DNA. The protein is Crossover junction endodeoxyribonuclease RuvC of Synechococcus sp. (strain RCC307).